A 111-amino-acid polypeptide reads, in one-letter code: Exocrine gland-secreted peptide 22 (111 aa).

An N-terminal signal peptide occupies residues 1–24 (MNSVPVMLFSISILLAAMLTEGRG).

Belongs to the exocrine gland-secreted peptide family. In terms of tissue distribution, expressed in acinar cells of the lacrimal gland from where it is secreted into tears. Not detected in a range of other tissues tested including other exocrine glands, internal organs and sensory epithelia.

The protein localises to the secreted. In terms of biological role, pheromone produced by juveniles which activates a small number of vomeronasal organ sensory neurons and exhibits a powerful inhibitory effect on adult male mating behavior. The sequence is that of Exocrine gland-secreted peptide 22 from Mus musculus (Mouse).